A 301-amino-acid polypeptide reads, in one-letter code: MANITMKELLEAGVHFGHQTKRWNPKMKEYIFGERNGIYIIDLQKTLKMFKEASKFVSDVAAEGKLVLFVGTKRQAQDAIAEEAKRCGMFYINQRWLGGLLTNWVTVQKSVKRLKELDEMATDGRYELLPKKEVIKLERERKHLQANLAGIKNLNRLPDCLFVIDSNKEQIAVKEARKLGIPVVAVVDTNCDPSEVDYVIPGNDDALRAIRLFASKIADSVAEGSQLADKSMIESTNVSNAAEVIPQSYIGDDEEHGLAQPTEEAAPVEEEINMEEVLGKGVRKQPVSENENVEAAAAEQK.

Residues 282–301 (VRKQPVSENENVEAAAAEQK) are disordered. Over residues 289-301 (ENENVEAAAAEQK) the composition is skewed to low complexity.

Belongs to the universal ribosomal protein uS2 family.

This is Small ribosomal subunit protein uS2 from Koribacter versatilis (strain Ellin345).